We begin with the raw amino-acid sequence, 329 residues long: Tetraacyldisaccharide 4'-kinase (329 aa).

58 to 65 (SVGGTGKT) is an ATP binding site.

The protein belongs to the LpxK family.

The catalysed reaction is a lipid A disaccharide + ATP = a lipid IVA + ADP + H(+). It participates in glycolipid biosynthesis; lipid IV(A) biosynthesis; lipid IV(A) from (3R)-3-hydroxytetradecanoyl-[acyl-carrier-protein] and UDP-N-acetyl-alpha-D-glucosamine: step 6/6. Transfers the gamma-phosphate of ATP to the 4'-position of a tetraacyldisaccharide 1-phosphate intermediate (termed DS-1-P) to form tetraacyldisaccharide 1,4'-bis-phosphate (lipid IVA). This is Tetraacyldisaccharide 4'-kinase from Idiomarina loihiensis (strain ATCC BAA-735 / DSM 15497 / L2-TR).